A 734-amino-acid chain; its full sequence is Protein arginine N-methyltransferase 5 (734 aa).

Residues 1-16 (MSNRTYADNLFPQQVA) show a composition bias toward polar residues. The segment at 1–39 (MSNRTYADNLFPQQVAEQHEEQMSSGSSPKSNSPSRSIS) is disordered. Positions 24–39 (SSGSSPKSNSPSRSIS) are enriched in low complexity. Residues 42 to 329 (EAANSRIHIG…EYSQALRHAV (288 aa)) are TIM barrel. An SAM-dependent MTase PRMT-type domain is found at 360–706 (LQAPLQPLSE…VDNTGVWYEW (347 aa)). S-adenosyl-L-methionine is bound at residue Y376. F379 lines the a protein pocket. Residues 385–386 (KY), E450, and 477–478 (DM) contribute to the S-adenosyl-L-methionine site. 2 residues coordinate a protein: E499 and E508. Active-site proton donor/acceptor residues include E499 and E508. The beta barrel stretch occupies residues 529–734 (PQKYTSYVKP…PNGESYYMRM (206 aa)). A dimerization region spans residues 541–589 (STHIHQTIKAQSIPYLSRAIPSHGRGEPELDEDEMWIQKYPQGHVRNNM).

The protein belongs to the class I-like SAM-binding methyltransferase superfamily. Protein arginine N-methyltransferase family. Homodimer. Interacts with cep-1 (via C-terminus domain); does not methylate cep-1. Interacts with cbp-1 (via N-terminus domain and HAT domain); the interaction results in methylation of cbp-1. Component of a complex that contains cep-1 and cbp-1. May interact with pid-2, pid-4 and pid-5.

Its subcellular location is the nucleus. The catalysed reaction is L-arginyl-[protein] + 2 S-adenosyl-L-methionine = N(omega),N(omega)'-dimethyl-L-arginyl-[protein] + 2 S-adenosyl-L-homocysteine + 2 H(+). Functionally, catalyzes the symmetrical dimethylation of arginine residues in targets such as small nuclear ribonucleoproteins, histone H2A/H4 and cbp-1. Dimethylation occurs in a distributive manner where the protein is released after the addition of the first methyl group prior to rebinding for the addition of the second methyl group. Plays a role in the negative regulation of DNA damage-induced apoptosis. By methylating cbp-1, may prevent apoptosis by repressing the capacity of cbp-1 to enhance cep-1 dependent transcription activation of the programmed cell death activator egl-1. Plays a role in heat and oxidative stress resistance. The polypeptide is Protein arginine N-methyltransferase 5 (Caenorhabditis elegans).